Consider the following 219-residue polypeptide: Ribosomal RNA small subunit methyltransferase I (219 aa).

It belongs to the methyltransferase superfamily. RsmI family.

It is found in the cytoplasm. The enzyme catalyses cytidine(1402) in 16S rRNA + S-adenosyl-L-methionine = 2'-O-methylcytidine(1402) in 16S rRNA + S-adenosyl-L-homocysteine + H(+). Functionally, catalyzes the 2'-O-methylation of the ribose of cytidine 1402 (C1402) in 16S rRNA. This is Ribosomal RNA small subunit methyltransferase I from Coprothermobacter proteolyticus (strain ATCC 35245 / DSM 5265 / OCM 4 / BT).